The sequence spans 56 residues: Genome polyprotein (56 aa).

Residues 1 to 30 (ETMLDRIASGDLESSVDDPRSAEDKRFESH) form a disordered region. A compositionally biased stretch (basic and acidic residues) spans 17–30 (DDPRSAEDKRFESH).

It belongs to the picornaviridae polyprotein family. As to quaternary structure, homopentamer. Homooligomer. Interacts with capsid protein VP2. Interacts with capsid protein VP3. Post-translationally, specific enzymatic cleavages by viral protease in vivo yield a variety of precursors and mature proteins. Polyprotein processing intermediates are produced, such as P1-2A which is a functional precursor of the structural proteins, VP0 which is a VP4-VP2 precursor, VP1-2A precursor, 3ABC precursor which is a stable and catalytically active precursor of 3A, 3B and 3C proteins, 3AB and 3CD precursors. The assembly signal 2A is removed from VP1-2A by a host protease, possibly host Cathepsin L. This cleavage occurs over a region of 3 amino-acids probably generating VP1 proteins with heterogeneous C-termini. The assembly signal 2A is removed from VP1-2A by a host protease, possibly host Cathepsin L in naked virions. This cleavage does not occur in enveloped virions. This cleavage occurs over a region of 3 amino-acids probably generating VP1 proteins with heterogeneous C-termini.

The protein localises to the virion. It is found in the host endosome. It localises to the host multivesicular body. Its function is as follows. Capsid proteins VP1, VP2, and VP3 form a closed capsid enclosing the viral positive strand RNA genome. All these proteins contain a beta-sheet structure called beta-barrel jelly roll. Together they form an icosahedral capsid (T=3) composed of 60 copies of each VP1, VP2, and VP3, with a diameter of approximately 300 Angstroms. VP1 is situated at the 12 fivefold axes, whereas VP2 and VP3 are located at the quasi-sixfold axes. The naked capsid interacts with the host receptor HAVCR1 to provide virion attachment to and probably entry into the target cell. Precursor component of immature procapsids that corresponds to an extended form of the structural protein VP1. After maturation, possibly by the host Cathepsin L, the assembly signal 2A is cleaved to give rise to the mature VP1 protein. This is Genome polyprotein from Callithrix (Owl-faced monkey).